The chain runs to 231 residues: Deoxyribose-phosphate aldolase (231 aa).

Aspartate 86 (proton donor/acceptor) is an active-site residue. The Schiff-base intermediate with acetaldehyde role is filled by lysine 147. The active-site Proton donor/acceptor is lysine 172. The tract at residues 206-231 is disordered; that stretch reads WQAETAGETVTEPESDRDGADTTDGY.

The protein belongs to the DeoC/FbaB aldolase family. DeoC type 1 subfamily.

The protein resides in the cytoplasm. It carries out the reaction 2-deoxy-D-ribose 5-phosphate = D-glyceraldehyde 3-phosphate + acetaldehyde. Its pathway is carbohydrate degradation; 2-deoxy-D-ribose 1-phosphate degradation; D-glyceraldehyde 3-phosphate and acetaldehyde from 2-deoxy-alpha-D-ribose 1-phosphate: step 2/2. Functionally, catalyzes a reversible aldol reaction between acetaldehyde and D-glyceraldehyde 3-phosphate to generate 2-deoxy-D-ribose 5-phosphate. The protein is Deoxyribose-phosphate aldolase of Haloarcula marismortui (strain ATCC 43049 / DSM 3752 / JCM 8966 / VKM B-1809) (Halobacterium marismortui).